Here is a 510-residue protein sequence, read N- to C-terminus: Ribonuclease Y (510 aa).

Residues 4-24 (LLWAVVALLAGLAGGAGIGVY) traverse the membrane as a helical segment. Residues 200–260 (TVSTVNLPSE…VRREVARVAL (61 aa)) form the KH domain. Positions 326 to 419 (VLQHSLECAL…VIAADAISGA (94 aa)) constitute an HD domain.

It belongs to the RNase Y family.

The protein resides in the cell membrane. Its function is as follows. Endoribonuclease that initiates mRNA decay. This Chloroflexus aurantiacus (strain ATCC 29366 / DSM 635 / J-10-fl) protein is Ribonuclease Y.